Consider the following 361-residue polypeptide: Anhydro-N-acetylmuramic acid kinase (361 aa).

10–17 lines the ATP pocket; that stretch reads GTSLDGVD.

This sequence belongs to the anhydro-N-acetylmuramic acid kinase family.

The catalysed reaction is 1,6-anhydro-N-acetyl-beta-muramate + ATP + H2O = N-acetyl-D-muramate 6-phosphate + ADP + H(+). Its pathway is amino-sugar metabolism; 1,6-anhydro-N-acetylmuramate degradation. The protein operates within cell wall biogenesis; peptidoglycan recycling. In terms of biological role, catalyzes the specific phosphorylation of 1,6-anhydro-N-acetylmuramic acid (anhMurNAc) with the simultaneous cleavage of the 1,6-anhydro ring, generating MurNAc-6-P. Is required for the utilization of anhMurNAc either imported from the medium or derived from its own cell wall murein, and thus plays a role in cell wall recycling. This Gluconobacter oxydans (strain 621H) (Gluconobacter suboxydans) protein is Anhydro-N-acetylmuramic acid kinase.